We begin with the raw amino-acid sequence, 615 residues long: Fibrinogen alpha chain (615 aa).

A signal peptide spans 1 to 19 (MFSVRDLCLVLSLVGAIKT). Residues 71–602 (CRMKGLIDEV…GHTKARPARG (532 aa)) adopt a coiled-coil conformation. The disordered stretch occupies residues 267–427 (FGGDGHARGD…TKQEFHTGKL (161 aa)). Residues 293-302 (GTSSIGNVNP) are compositionally biased toward polar residues. Threonine 325 carries O-linked (GalNAc...) threonine glycosylation. Low complexity predominate over residues 373-396 (GSAGTWNTGSSGSSSFRPDSSGHG). A disulfide bridge connects residues cysteine 455 and cysteine 485. Positions 530-615 (EFAALGESGS…SPLGEPSLTP (86 aa)) are disordered. Positions 537–549 (SGSSSSKTSTHSK) are enriched in low complexity. Polar residues predominate over residues 550 to 560 (QFVSSSTTVNR). A compositionally biased stretch (basic residues) spans 591–601 (QKGHTKARPAR).

In terms of assembly, heterohexamer; disulfide linked. Contains 2 sets of 3 non-identical chains (alpha, beta and gamma). The 2 heterotrimers are in head to head conformation with the N-termini in a small central domain. Conversion of fibrinogen to fibrin is triggered by thrombin, which cleaves fibrinopeptides A and B from alpha and beta chains, and thus exposes the N-terminal polymerization sites responsible for the formation of the soft clot. The soft clot is converted into the hard clot by factor XIIIA which catalyzes the epsilon-(gamma-glutamyl)lysine cross-linking between gamma chains (stronger) and between alpha chains (weaker) of different monomers. Post-translationally, forms F13A-mediated cross-links between a glutamine and the epsilon-amino group of a lysine residue, forming fibronectin-fibrinogen heteropolymers.

The protein resides in the secreted. Its function is as follows. Cleaved by the protease thrombin to yield monomers which, together with fibrinogen beta (FGB) and fibrinogen gamma (FGG), polymerize to form an insoluble fibrin matrix. Fibrin has a major function in hemostasis as one of the primary components of blood clots. In addition, functions during the early stages of wound repair to stabilize the lesion and guide cell migration during re-epithelialization. Was originally thought to be essential for platelet aggregation, based on in vitro studies using anticoagulated blood. However, subsequent studies have shown that it is not absolutely required for thrombus formation in vivo. Enhances expression of SELP in activated platelets via an ITGB3-dependent pathway. Maternal fibrinogen is essential for successful pregnancy. Fibrin deposition is also associated with infection, where it protects against IFNG-mediated hemorrhage. May also facilitate the immune response via both innate and T-cell mediated pathways. In Bos taurus (Bovine), this protein is Fibrinogen alpha chain (FGA).